A 661-amino-acid chain; its full sequence is MKTLKTLKIFIIVFIASVSLASFAGFGESCSSLPTTSDGYLETDTAYGYIIRNIDMKDPRGNCNSVASSITFCFKNVEGSSSPCTMYTLNEGDSKKISDLSTDNNPDLGANPVLKNIVLTVKKWDNDLCLVMPTSRGPMPVACKSLSATPTPPPSEDKNCNIGKSCYTGANYSQSLINFSGLAVQCLSETLNKIFFAGKSCSAQDQNSRITNLAAFSTFQGYLKRIIGAALILYTMFFAFNMALNTEYASTEKIALFVIKFLFVAYFSIGLGPLDFSGGQPTKENGMLKYGLPLLTGAAPDFAQMIFNAAGSRGLCQFDNSKYKDGYKFYGLWDAIDCRIGYYLGLDLLYNIDKNRVLGNVVGNGPRGNNTPIPNFDPEGKNDRPKDLSKAGALRFFTVMFGFFMAGNVIILAAGLVFSVIFLSILLYFITHYLVCMITIYVMTYISPIFIPMALFTRTKAYFDGWLKVCISCALQPAVVAGFIALLITMYDSAIFKNCEFLRYDYERGDIRFSTFELRLPVGGADKCQESFGYKMLEYYAGKGWEEHLLILFPIKSIVRDVVSILAELLCVLVFSVIFYYFSKSIGRFASDLTNGPNMDAVTASPTKIVGLVKKGAAFLKDAAMASQGKPLVGDKPGVGGKRKEGEQQGGDLASGSGGGK.

A signal peptide spans 1–24 (MKTLKTLKIFIIVFIASVSLASFA). Transmembrane regions (helical) follow at residues 226–246 (IIGA…ALNT), 254–274 (IALF…LGPL), 410–430 (IILA…LYFI), 436–456 (CMIT…MALF), 469–489 (VCIS…LLIT), and 562–582 (VVSI…FYYF). The disordered stretch occupies residues 629–661 (GKPLVGDKPGVGGKRKEGEQQGGDLASGSGGGK).

This sequence belongs to the TrbL/VirB6 family.

Its subcellular location is the cell membrane. This is an uncharacterized protein from Rickettsia conorii (strain ATCC VR-613 / Malish 7).